A 280-amino-acid chain; its full sequence is uncharacterized protein (280 aa).

The region spanning 26 to 127 is the KilA-N domain; that stretch reads YFMSMKLLDV…TRVSILMRYY (102 aa).

This is an uncharacterized protein from Vertebrata (FPV).